A 177-amino-acid chain; its full sequence is Nucleoside triphosphate/diphosphate phosphatase (177 aa).

Residue R23 is the Proton donor of the active site. N87, D103, D105, D107, D120, and E123 together coordinate Mg(2+).

Belongs to the Ntdp family. Mg(2+) serves as cofactor.

The catalysed reaction is a ribonucleoside 5'-triphosphate + H2O = a ribonucleoside 5'-diphosphate + phosphate + H(+). The enzyme catalyses a ribonucleoside 5'-diphosphate + H2O = a ribonucleoside 5'-phosphate + phosphate + H(+). Has nucleoside phosphatase activity towards nucleoside triphosphates and nucleoside diphosphates. The protein is Nucleoside triphosphate/diphosphate phosphatase of Streptococcus agalactiae serotype Ia (strain ATCC 27591 / A909 / CDC SS700).